The sequence spans 380 residues: Protein Wnt-5a (380 aa).

Residues 1–35 (MKKSIGILSPGVALGTAGSAMSSKFFVMALAVFFS) form the signal peptide. Positions 36–61 (FAQVVIEANSWWSLGMNNPVQMSEVY) are excised as a propeptide. Cysteine 104 and cysteine 115 form a disulfide bridge. Asparagine 114 and asparagine 120 each carry an N-linked (GlcNAc...) asparagine glycan. 10 disulfide bridges follow: cysteine 154/cysteine 162, cysteine 164/cysteine 182, cysteine 238/cysteine 252, cysteine 240/cysteine 247, cysteine 309/cysteine 340, cysteine 325/cysteine 335, cysteine 339/cysteine 379, cysteine 355/cysteine 370, cysteine 357/cysteine 367, and cysteine 362/cysteine 363. A lipid anchor (O-palmitoleoyl serine; by PORCN) is attached at serine 244. N-linked (GlcNAc...) asparagine glycosylation is found at asparagine 312 and asparagine 326.

Belongs to the Wnt family. In terms of assembly, forms a soluble 1:1 complex with AFM; this prevents oligomerization and is required for prolonged biological activity. The complex with AFM may represent the physiological form in body fluids. Homooligomer; disulfide-linked, leading to inactivation (in vitro). Interacts with PORCN. Interacts with WLS. Interacts with glypican GCP3. Interacts with PKD1 (via extracellular domain). Interacts with TMEM67. Post-translationally, glycosylation is necessary for secretion but not for activity. In terms of processing, palmitoleoylation is required for efficient binding to frizzled receptors. Depalmitoleoylation leads to Wnt signaling pathway inhibition. Proteolytic processing by TIKI1 and TIKI2 promotes oxidation and formation of large disulfide-bond oligomers, leading to inactivation of WNT5A.

It is found in the secreted. Its subcellular location is the extracellular space. It localises to the extracellular matrix. Ligand for members of the frizzled family of seven transmembrane receptors. Can activate or inhibit canonical Wnt signaling, depending on receptor context. In the presence of FZD4, activates beta-catenin signaling. In the presence of ROR2, inhibits the canonical Wnt pathway by promoting beta-catenin degradation through a GSK3-independent pathway which involves down-regulation of beta-catenin-induced reporter gene expression. Suppression of the canonical pathway allows chondrogenesis to occur. Inhibits tumor formation. Stimulates cell migration. Decreases proliferation, migration, invasiveness and clonogenicity of carcinoma cells and may act as a tumor suppressor. Mediates motility of melanoma cells. Required during embryogenesis for extension of the primary anterior-posterior axis and for outgrowth of limbs and the genital tubercle. Inhibits type II collagen expression in chondrocytes. The polypeptide is Protein Wnt-5a (Oryctolagus cuniculus (Rabbit)).